Consider the following 538-residue polypeptide: Casein kinase I homolog 1 (538 aa).

Residues 39 to 61 (SPARSSMTATTAANSNSNSSRDD) form a disordered region. The span at 41-57 (ARSSMTATTAANSNSNS) shows a compositional bias: low complexity. The Protein kinase domain occupies 69–353 (YKIGKKIGEG…ETADGQYDWM (285 aa)). ATP-binding positions include 75–83 (IGEGSFGVL) and lysine 98. Aspartate 188 functions as the Proton acceptor in the catalytic mechanism. Disordered stretches follow at residues 366–428 (NKKP…KPKL) and 474–527 (QQQL…LAAS). 2 stretches are compositionally biased toward low complexity: residues 391–410 (QLQMQQLQMQQLQQQQQQQQ) and 474–498 (QQQLRATGQPPSQPQAQTQSQQFGA). Phosphoserine is present on residues serine 522, serine 523, and serine 527. S-palmitoyl cysteine attachment occurs at residues cysteine 537 and cysteine 538.

It belongs to the protein kinase superfamily. CK1 Ser/Thr protein kinase family. Casein kinase I subfamily. Palmitoylated by AKR1.

It localises to the cell membrane. Its subcellular location is the mitochondrion membrane. The catalysed reaction is L-seryl-[protein] + ATP = O-phospho-L-seryl-[protein] + ADP + H(+). The enzyme catalyses L-threonyl-[protein] + ATP = O-phospho-L-threonyl-[protein] + ADP + H(+). Its function is as follows. Casein kinases are operationally defined by their preferential utilization of acidic proteins such as caseins as substrates. This is Casein kinase I homolog 1 (YCK1) from Saccharomyces cerevisiae (strain ATCC 204508 / S288c) (Baker's yeast).